The chain runs to 657 residues: MQTPLIDLRNIRKSYGGGDSPQVDVLRGIDLSIHAGEFVAIVGASGSGKSTLMNILGCLDRPTSGEYLFAGENVAHLDSDELAWLRREAFGFVFQGYHLIPSASAQENVEMPAIYAGTPTAERHTRAAALLERLGLASRSGNRPHQLSGGQQQRVSIARALMNGGHIILADEPTGALDSHSGAEVMALLDELASQGHVVILITHDREVAARAKRIIEIRDGEIISDTATSDPSVQLSANAGALQAVDLRQRLADGSEPTGAWKGELLEAIQAAWRVMWINRFRTALTLLGIIIGVASVVVMLAVGEGSKRQVMAQMGAFGSNIIYLSGYSPNPRTPEGIVTLDDVAALANLPQVKRIMAVNGAKAGVRFGNADYMSYVGGNDTNFPEIFNWPVAQGSYFSEADESSAAAVAVIGHKVREKLLKDVANPIGQYILIENVPFQVVGVLSEKGASSGDSDSDDRIAVPYSAASIRLFGDHNPQYVAIAAADASRVKQTEQEIDELMLRMHGGKRDFELTNNAAMIQAEARTQNTLSLMLGAIAAISLLVGGIGVMNIMLMTVRERTREIGIRMATGARQRDILRQFLTEAVMLSVVGGLAGIGVALIIGGILILSEVAVAFSLAAVLGAFACALVTGVIFGFMPARKAARLDPVTALTSE.

In terms of domain architecture, ABC transporter spans 6–245; the sequence is IDLRNIRKSY…LSANAGALQA (240 aa). 43 to 50 is a binding site for ATP; it reads GASGSGKS. The next 4 helical transmembrane spans lie at 285-305, 532-552, 590-610, and 620-640; these read ALTLLGIIIGVASVVVMLAVG, LSLMLGAIAAISLLVGGIGVM, LSVVGGLAGIGVALIIGGILI, and LAAVLGAFACALVTGVIFGFM.

The protein belongs to the ABC transporter superfamily. Macrolide exporter (TC 3.A.1.122) family. Part of the tripartite efflux system PvdRT-OpmQ, which is composed of an inner membrane component with both ATPase and permease domains, PvdT, a periplasmic membrane fusion protein, PvdR, and an outer membrane component, OpmQ.

Its subcellular location is the cell inner membrane. Functionally, part of the tripartite efflux system PvdRT-OpmQ required for the secretion into the extracellular milieu of the siderophore pyoverdine (PVD), which is involved in iron acquisition. This subunit binds PVD and drives its secretion by hydrolyzing ATP. The system is responsible for export of newly synthesized PVD after the final steps of biosynthesis have taken place in the periplasm. It is also responsible for recycling of PVD after internalization of ferri-PVD into the periplasm by the outer-membrane receptor FpvA and release of iron from PVD, thus making PVD available for new cycles of iron uptake. This is Pyoverdine export ATP-binding/permease protein PvdT from Pseudomonas fluorescens (strain ATCC BAA-477 / NRRL B-23932 / Pf-5).